Here is a 428-residue protein sequence, read N- to C-terminus: Spliceosome RNA helicase DDX39B (428 aa).

Residues 1–19 show a composition bias toward acidic residues; it reads MAENDVDNELLDYEDDEVE. Positions 1-31 are disordered; sequence MAENDVDNELLDYEDDEVETAAGGDGAEAPA. Ala-2 carries the N-acetylalanine modification. Position 36 is an N6-acetyllysine; alternate (Lys-36). Lys-36 participates in a covalent cross-link: Glycyl lysine isopeptide (Lys-Gly) (interchain with G-Cter in SUMO2); alternate. Ser-38 and Ser-41 each carry phosphoserine. The short motif at 45-73 is the Q motif element; that stretch reads SGFRDFLLKPELLRAIVDCGFEHPSEVQH. In terms of domain architecture, Helicase ATP-binding spans 76–249; sequence IPQAILGMDV…RKFMQDPMEI (174 aa). 89 to 96 contributes to the ATP binding site; that stretch reads AKSGMGKT. Phosphothreonine is present on Thr-172. The DECD box signature appears at 196 to 199; it reads DECD. Positions 261–422 constitute a Helicase C-terminal domain; that stretch reads GLQQYYVKLK…ELPDEIDISS (162 aa).

This sequence belongs to the DEAD box helicase family. DECD subfamily. Homodimer, and heterodimer with DDX39A. DDX39B interacts with the THO subcomplex to form the THO-DDX39B complex which multimerizes into a 28-subunit tetrameric assembly. Component of the transcription/export (TREX) complex at least composed of ALYREF/THOC4, DDX39B, SARNP/CIP29, CHTOP and the THO subcomplex; in the complex interacts with THOC2. THOC1-THOC2-THOC3-DDX39B subcomplex is sufficient for the interaction with export factor NXF1-NXT1. TREX seems to have a dynamic structure involving ATP-dependent remodeling. Within the TREX complex bridges ALYREF/THOC4 and the THO subcomplex, and, in a ATP-dependent manner, ALYREF/THOC4 and SARNP/CIP29. Component of the spliceosome. Interacts directly with U2AF2. Interacts with RBM8A, RNPS1 and SRRM1, FYTTD1/UIF, THOC1, MX1 and POLDIP3. Interacts with LUZP4. Interacts with SARNP/CIP29 (via the C-terminal domain); the interaction is direct and facilitates RNA binding of DDX39B. As to quaternary structure, (Microbial infection) Interacts with human cytomegalovirus/HHV-5 protein UL69.

Its subcellular location is the nucleus. The protein resides in the nucleus speckle. The protein localises to the cytoplasm. It carries out the reaction ATP + H2O = ADP + phosphate + H(+). Involved in nuclear export of spliced and unspliced mRNA. Component of the TREX complex which is thought to couple mRNA transcription, processing and nuclear export, and specifically associates with spliced mRNA and not with unspliced pre-mRNA. The TREX complex is recruited to spliced mRNAs by a transcription-independent mechanism, binds to mRNA upstream of the exon-junction complex (EJC) and is recruited in a splicing- and cap-dependent manner to a region near the 5' end of the mRNA where it functions in mRNA export to the cytoplasm via the TAP/NXF1 pathway. The THOC1-THOC2-THOC3 core complex alone is sufficient to promote ATPase activity of DDX39B; in the complex THOC2 is the only component that directly interacts with DDX39B. Associates with SARNP/CIP29, which facilitates RNA binding of DDX39B and likely plays a role in mRNA export. May undergo several rounds of ATP hydrolysis during assembly of TREX to drive subsequent loading of components such as ALYREF/THOC4 and CHTOP onto mRNA. Also associates with pre-mRNA independent of ALYREF/THOC4. Involved in the nuclear export of intronless mRNA; the ATP-bound form is proposed to recruit export adapter ALYREF/THOC4 to intronless mRNA; its ATPase activity is cooperatively stimulated by RNA and ALYREF/THOC4 and ATP hydrolysis is thought to trigger the dissociation from RNA to allow the association of ALYREF/THOC4 and the NXF1-NXT1 heterodimer. Involved in transcription elongation and genome stability. Its function is as follows. Splice factor that is required for the first ATP-dependent step in spliceosome assembly and for the interaction of U2 snRNP with the branchpoint. Has both RNA-stimulated ATP binding/hydrolysis activity and ATP-dependent RNA unwinding activity. Even with the stimulation of RNA, the ATPase activity is weak. Can only hydrolyze ATP but not other NTPs. The RNA stimulation of ATPase activity does not have a strong preference for the sequence and length of the RNA. However, ssRNA stimulates the ATPase activity much more strongly than dsRNA. Can unwind 5' or 3' overhangs or blunt end RNA duplexes in vitro. The ATPase and helicase activities are not influenced by U2AF2; the effect of ALYREF/THOC4 is reported conflictingly with [PubMed:23299939] reporting a stimulatory effect. Functionally, (Microbial infection) The TREX complex is essential for the export of Kaposi's sarcoma-associated herpesvirus (KSHV) intronless mRNAs and infectious virus production. This is Spliceosome RNA helicase DDX39B from Homo sapiens (Human).